A 619-amino-acid chain; its full sequence is Replication restart protein PriA (619 aa).

Positions 119–285 (LKELQKHPAS…KDKALVRLKG (167 aa)) constitute a Helicase ATP-binding domain. 132–139 (GDTGSGKT) contributes to the ATP binding site. Positions 228 to 231 (DEEH) match the DEAH box motif. Zn(2+)-binding residues include Cys-336, Cys-339, Cys-345, Cys-348, Cys-363, Cys-366, Cys-376, and Cys-379. The Helicase C-terminal domain occupies 371–532 (PIPKICNACQ…ELYPPFSRLC (162 aa)).

This sequence belongs to the helicase family. PriA subfamily. As to quaternary structure, component of the replication restart primosome. Zn(2+) is required as a cofactor.

The enzyme catalyses Couples ATP hydrolysis with the unwinding of duplex DNA by translocating in the 3'-5' direction.. The catalysed reaction is ATP + H2O = ADP + phosphate + H(+). Initiates the restart of stalled replication forks, which reloads the replicative helicase on sites other than the origin of replication. Recognizes and binds to abandoned replication forks and remodels them to uncover a helicase loading site. Promotes assembly of the primosome at these replication forks. The polypeptide is Replication restart protein PriA (Helicobacter pylori (strain J99 / ATCC 700824) (Campylobacter pylori J99)).